Here is a 442-residue protein sequence, read N- to C-terminus: D-galactonate dehydratase family member SSLG_02014 (442 aa).

His161 provides a ligand contact to substrate. Tyr197 acts as the Proton donor/acceptor in catalysis. Asp246 is a binding site for Mg(2+). His248 (proton donor/acceptor) is an active-site residue. Residues Glu272 and Glu298 each contribute to the Mg(2+) site. Substrate is bound by residues Glu298, Arg319, His348, Asp352, and Glu375.

This sequence belongs to the mandelate racemase/muconate lactonizing enzyme family. GalD subfamily. Mg(2+) serves as cofactor.

It catalyses the reaction D-mannonate = 2-dehydro-3-deoxy-D-gluconate + H2O. Has low D-mannonate dehydratase activity (in vitro), suggesting that this is not a physiological substrate and that it has no significant role in D-mannonate degradation in vivo. Has no detectable activity with a panel of 70 other acid sugars (in vitro). The chain is D-galactonate dehydratase family member SSLG_02014 from Streptomyces sp. (strain SPB78).